The chain runs to 545 residues: Chaperonin GroEL 4 (545 aa).

ATP-binding positions include 30–33 (TLGP), K51, 87–91 (DGTTT), G415, and D495.

This sequence belongs to the chaperonin (HSP60) family. As to quaternary structure, forms a cylinder of 14 subunits composed of two heptameric rings stacked back-to-back. Interacts with the co-chaperonin GroES.

It is found in the cytoplasm. The enzyme catalyses ATP + H2O + a folded polypeptide = ADP + phosphate + an unfolded polypeptide.. Its function is as follows. Together with its co-chaperonin GroES, plays an essential role in assisting protein folding. The GroEL-GroES system forms a nano-cage that allows encapsulation of the non-native substrate proteins and provides a physical environment optimized to promote and accelerate protein folding. This chain is Chaperonin GroEL 4, found in Rhizobium meliloti (strain 1021) (Ensifer meliloti).